A 183-amino-acid chain; its full sequence is Cuticle protein 2 (183 aa).

Residues 1–15 form the signal peptide; that stretch reads MKLIVVAALIGVCAG. Residues 58-121 form the Chitin-binding type R&amp;R domain; the sequence is SQGFQYVYDT…AQGAHLPTPP (64 aa).

This is Cuticle protein 2 from Lonomia obliqua (Moth).